Here is a 155-residue protein sequence, read N- to C-terminus: Large ribosomal subunit protein uL13 (155 aa).

This sequence belongs to the universal ribosomal protein uL13 family. As to quaternary structure, part of the 50S ribosomal subunit.

Its function is as follows. This protein is one of the early assembly proteins of the 50S ribosomal subunit, although it is not seen to bind rRNA by itself. It is important during the early stages of 50S assembly. This Rickettsia bellii (strain OSU 85-389) protein is Large ribosomal subunit protein uL13.